A 268-amino-acid chain; its full sequence is Tryptophan synthase alpha chain (268 aa).

Active-site proton acceptor residues include Glu49 and Asp60.

The protein belongs to the TrpA family. In terms of assembly, tetramer of two alpha and two beta chains.

The catalysed reaction is (1S,2R)-1-C-(indol-3-yl)glycerol 3-phosphate + L-serine = D-glyceraldehyde 3-phosphate + L-tryptophan + H2O. Its pathway is amino-acid biosynthesis; L-tryptophan biosynthesis; L-tryptophan from chorismate: step 5/5. In terms of biological role, the alpha subunit is responsible for the aldol cleavage of indoleglycerol phosphate to indole and glyceraldehyde 3-phosphate. The protein is Tryptophan synthase alpha chain of Xanthomonas oryzae pv. oryzae (strain PXO99A).